The following is a 527-amino-acid chain: MESLQKTSDAGQMFDVVVIGGGISGLSAAKLLAEHEVNVLVLEARERVGGRTYTVRNEHVDYVDVGGAYVGPTQNRILRLSKQLGLETYKVNVNERLVHYVKGKTYPFRGAFPPVWNPIAYLDYNNLWRTMDNMGKEIPADAPWEAPHAVEWDKMTMKDLIEKICWTKTARQFASLFVNINVTSEPHEVSALWFLWYVKQCGGTTRIFSITNGGQERKFVGGSGQVSERIMQLLGDRVKLRSPVTYVDQSSENITVETLNRELYECRYVISAIPPTLTAKIHFRPELPSERNQLIQRLPMGAVIKCMMYYKEAFWKKKDYCGCMIIEDEEAPISITLDDTKPDGSLPAIMGFILARKADRLAKVHKDIRKRKICELYAKVLGSQEALHPVHYEEKNWCQEQYSGGCYTAYFPPGIMTQYGRVIRQPVGRIYFAGTETATQWSGYMEGAVEAGERAAREVLNALGKLSAKDIWIQEPEAEDVPAVEITPSFWERNLPSVSGLLKIVGFSTSITALWFVMYRFRLLSRS.

Position 1 is an N-acetylmethionine (Met-1). The Cytoplasmic portion of the chain corresponds to 1 to 497 (MESLQKTSDA…PSFWERNLPS (497 aa)). The residue at position 383 (Ser-383) is a Phosphoserine. Cys-406 is modified (S-8alpha-FAD cysteine). Residues 498–518 (VSGLLKIVGFSTSITALWFVM) form a helical; Anchor for type IV membrane protein membrane-spanning segment. At 519–527 (YRFRLLSRS) the chain is on the mitochondrial intermembrane side. The interaction with membrane phospholipid headgroups stretch occupies residues 520–522 (RFR).

This sequence belongs to the flavin monoamine oxidase family. Monomer, homo- or heterodimer (containing two subunits of similar size). Each subunit contains a covalently bound flavin. Enzymatically active as monomer. Requires FAD as cofactor.

It is found in the mitochondrion outer membrane. The catalysed reaction is a secondary aliphatic amine + O2 + H2O = a primary amine + an aldehyde + H2O2. It carries out the reaction a primary methyl amine + O2 + H2O = an aldehyde + H2O2 + NH4(+). It catalyses the reaction (R)-adrenaline + O2 + H2O = (R)-3,4-dihydroxymandelaldehyde + methylamine + H2O2. The enzyme catalyses dopamine + O2 + H2O = 3,4-dihydroxyphenylacetaldehyde + H2O2 + NH4(+). The catalysed reaction is tyramine + O2 + H2O = (4-hydroxyphenyl)acetaldehyde + H2O2 + NH4(+). It carries out the reaction (R)-noradrenaline + O2 + H2O = (R)-3,4-dihydroxymandelaldehyde + H2O2 + NH4(+). It catalyses the reaction serotonin + O2 + H2O = (5-hydroxyindol-3-yl)acetaldehyde + H2O2 + NH4(+). The enzyme catalyses kynuramine + O2 + H2O = 3-(2-aminophenyl)-3-oxopropanal + H2O2 + NH4(+). The catalysed reaction is tryptamine + O2 + H2O = indole-3-acetaldehyde + H2O2 + NH4(+). It carries out the reaction 2-phenylethylamine + O2 + H2O = 2-phenylacetaldehyde + H2O2 + NH4(+). Functionally, catalyzes the oxidative deamination of primary and some secondary amine such as neurotransmitters, with concomitant reduction of oxygen to hydrogen peroxide and has important functions in the metabolism of neuroactive and vasoactive amines in the central nervous system and peripheral tissues. Preferentially oxidizes serotonin. Also catalyzes the oxidative deamination of kynuramine to 3-(2-aminophenyl)-3-oxopropanal that can spontaneously condense to 4-hydroxyquinoline. In Bos taurus (Bovine), this protein is Amine oxidase [flavin-containing] A.